Here is a 451-residue protein sequence, read N- to C-terminus: Probable plasmid replicative DNA helicase (451 aa).

One can recognise an SF4 helicase domain in the interval glutamine 194 to tryptophan 451. Alanine 225–threonine 232 serves as a coordination point for ATP.

Belongs to the helicase family. DnaB subfamily. In terms of assembly, homohexamer.

It carries out the reaction Couples ATP hydrolysis with the unwinding of duplex DNA at the replication fork by translocating in the 5'-3' direction. This creates two antiparallel DNA single strands (ssDNA). The leading ssDNA polymer is the template for DNA polymerase III holoenzyme which synthesizes a continuous strand.. The enzyme catalyses ATP + H2O = ADP + phosphate + H(+). Its function is as follows. A replicative DNA helicase, it participates in initiation and elongation during DNA replication. Travels ahead of the DNA replisome, separating dsDNA into templates for DNA synthesis. A processive ATP-dependent 5'-3' DNA helicase it has DNA-dependent ATPase activity. Functionally, the plasmid this protein is encoded on is thought to be required for growth within mammalian cells. The polypeptide is Probable plasmid replicative DNA helicase (Chlamydia trachomatis serovar L2 (strain ATCC VR-902B / DSM 19102 / 434/Bu)).